The sequence spans 671 residues: Leucine aminopeptidase 2 (671 aa).

Residues 184–186 (QLE) and 311–316 (PYGGME) each bind substrate. His340 is a Zn(2+) binding site. The Proton acceptor role is filled by Glu341. Zn(2+)-binding residues include His344 and Glu363. Tyr429 serves as the catalytic Proton donor.

The protein belongs to the peptidase M1 family. It depends on Zn(2+) as a cofactor.

It is found in the cytoplasm. The protein resides in the nucleus. The catalysed reaction is an epoxide + H2O = an ethanediol. Its activity is regulated as follows. Inhibited by 3-(4-benzyloxyphenyl)-2-(R)-amino-1-propanethiol (thioamine) and N-hydroxy-N-(2-(S)-amino-3-(4-benzyloxyphenyl)propyl)-5-carboxypen-tanamide (hydroxamic acid). The aminopeptidase activity is stimulated by LTA(4). Functionally, aminopeptidase that preferentially cleaves di- and tripeptides. Also has low epoxide hydrolase activity (in vitro). Can hydrolyze the epoxide leukotriene LTA(4) but it forms preferentially 5,6-dihydroxy-7,9,11,14-eicosatetraenoic acid rather than the cytokine leukotriene B(4) as the product compared to the homologous mammalian enzyme (in vitro). The sequence is that of Leucine aminopeptidase 2 from Saccharomyces cerevisiae (strain YJM789) (Baker's yeast).